The chain runs to 141 residues: Hemoglobin subunit alpha-D (141 aa).

In terms of domain architecture, Globin spans 1–141 (VLTGEDKKHV…VAAVLAEKYR (141 aa)). Heme b-binding residues include histidine 58 and histidine 87.

The protein belongs to the globin family. Heterotetramer of two alpha-D chains and two beta chains. In terms of tissue distribution, red blood cells.

Involved in oxygen transport from the lung to the various peripheral tissues. The protein is Hemoglobin subunit alpha-D (HBAD) of Turdus merula (Common blackbird).